The sequence spans 510 residues: Secreted RxLR effector protein 24 (510 aa).

Positions 1 to 18 (MRGAFYVAIALLGSHTAA) are cleaved as a signal peptide. A RxLR-dEER motif is present at residues 47–68 (RVLRERRDSKDKLTVHAGAEER).

This sequence belongs to the RxLR effector family.

It is found in the secreted. The protein localises to the host nucleus. Functionally, secreted effector that acts as an elicitor that induces cell death in host plant cells. The chain is Secreted RxLR effector protein 24 from Plasmopara viticola (Downy mildew of grapevine).